The primary structure comprises 98 residues: Protein FAM24A (98 aa).

The N-terminal stretch at 1 to 29 (MFDLRTKVMIGIASTLLIAAIVLITVVFC) is a signal peptide.

The protein belongs to the FAM24 family.

It localises to the secreted. This Rattus norvegicus (Rat) protein is Protein FAM24A (Fam24a).